The chain runs to 523 residues: Cytochrome P450 CYP82J17 (523 aa).

Residues 4 to 24 form a helical membrane-spanning segment; it reads FLSQPITIVLAILSVLLYNIW. A heme-binding site is contributed by cysteine 462.

The protein belongs to the cytochrome P450 family. In terms of tissue distribution, mainly expressed in leaves and seed pods and, to a lower extent, in flowers and stems.

It localises to the membrane. It functions in the pathway steroid metabolism; cholesterol metabolism. Involved in the biosynthesis of spiroketal steroid and saponin natural products from cholesterol such as diosgenin and analogs (e.g. furostanol and spirostanol), plant defense compounds used as main precursors for the industrial production of steroid hormones. During the 5,6-spiroketalization of cholesterol, may catalyze the 27-monohydroxylation of furostanol-type steroid to an intermediate product that undergoes a stereospecific formation of the terminal heterocycle to yield diosgenin. The chain is Cytochrome P450 CYP82J17 from Trigonella foenum-graecum (Fenugreek).